Here is a 336-residue protein sequence, read N- to C-terminus: F420-dependent glucose-6-phosphate dehydrogenase (336 aa).

Coenzyme F420-(gamma-Glu)n is bound at residue Asp-39. His-40 (proton donor) is an active-site residue. Residues Thr-76 and 107 to 108 (TG) each bind coenzyme F420-(gamma-Glu)n. Catalysis depends on Glu-109, which acts as the Proton acceptor. Residues Asn-112, 177–178 (GG), and 180–181 (AV) contribute to the coenzyme F420-(gamma-Glu)n site. Thr-195, Lys-198, Lys-259, and Arg-283 together coordinate substrate.

It belongs to the F420-dependent glucose-6-phosphate dehydrogenase family. Homodimer.

The enzyme catalyses oxidized coenzyme F420-(gamma-L-Glu)(n) + D-glucose 6-phosphate + H(+) = 6-phospho-D-glucono-1,5-lactone + reduced coenzyme F420-(gamma-L-Glu)(n). Its function is as follows. Catalyzes the coenzyme F420-dependent oxidation of glucose 6-phosphate (G6P) to 6-phosphogluconolactone. Appears to have a role in resistance to oxidative stress, via its consumption of G6P that serves as a source of reducing power to combat oxidative stress in mycobacteria. The protein is F420-dependent glucose-6-phosphate dehydrogenase of Mycobacterium avium (strain 104).